The following is a 408-amino-acid chain: Hepatocyte nuclear factor 4-gamma (408 aa).

Residues 9-84 (NCLCAICGDR…AGMKKEAVQN (76 aa)) constitute a DNA-binding region (nuclear receptor). 2 consecutive NR C4-type zinc fingers follow at residues 12–32 (CAIC…CDGC) and 48–72 (CRFS…LRKC). A Phosphoserine modification is found at Ser-94. Positions 99–328 (SNIPSINTLA…NLLQEMLLGG (230 aa)) constitute an NR LBD domain. A disordered region spans residues 369–408 (ATPETPLPSPPQGSGQEPYKITANQASVISHQSLSKQKQL). Phosphothreonine is present on residues Thr-370 and Thr-373. Ser-377 carries the post-translational modification Phosphoserine. The segment covering 390–408 (TANQASVISHQSLSKQKQL) has biased composition (polar residues).

This sequence belongs to the nuclear hormone receptor family. NR2 subfamily.

It localises to the nucleus. Functionally, transcription factor. Has a lower transcription activation potential than HNF4-alpha. This Mus musculus (Mouse) protein is Hepatocyte nuclear factor 4-gamma (Hnf4g).